Consider the following 297-residue polypeptide: Large ribosomal subunit protein uL18 (297 aa).

N-acetylglycine is present on Gly-2. N6-acetyllysine is present on residues Lys-5 and Lys-48. Ser-185 carries the post-translational modification Phosphoserine. Position 220 is an N6-acetyllysine; alternate (Lys-220). Lys-220 participates in a covalent cross-link: Glycyl lysine isopeptide (Lys-Gly) (interchain with G-Cter in SUMO1); alternate. Lys-220 participates in a covalent cross-link: Glycyl lysine isopeptide (Lys-Gly) (interchain with G-Cter in SUMO2); alternate. Thr-232 carries the phosphothreonine modification. The interval 253 to 297 (YEKKPKREVKKKRWNRPKMSLAQKKDRVAQKKASFLRAQERAAES) is disordered. A compositionally biased stretch (basic residues) spans 258 to 268 (KREVKKKRWNR). At Ser-272 the chain carries Phosphoserine.

It belongs to the universal ribosomal protein uL18 family. As to quaternary structure, component of the large ribosomal subunit (LSU). Part of the 5S RNP complex, which is a LSU subcomplex composed of the 5S RNA, RPL5 and RPL11. Component of a hexameric 5S RNP precursor complex, composed of 5S RNA, RRS1, RPF2/BXDC1, RPL5, RPL11 and HEATR3; this complex acts as a precursor for ribosome assembly. Interacts with isoform 1 of NVL in an ATP-dependent manner. Interacts with RRP1B. Interacts with IPO5, IPO7 and KPNB1; these interactions may be involved in RPL5 nuclear import for the assembly of ribosomal subunits.

It is found in the cytoplasm. It localises to the nucleus. Its subcellular location is the nucleolus. Component of the ribosome, a large ribonucleoprotein complex responsible for the synthesis of proteins in the cell. The small ribosomal subunit (SSU) binds messenger RNAs (mRNAs) and translates the encoded message by selecting cognate aminoacyl-transfer RNA (tRNA) molecules. The large subunit (LSU) contains the ribosomal catalytic site termed the peptidyl transferase center (PTC), which catalyzes the formation of peptide bonds, thereby polymerizing the amino acids delivered by tRNAs into a polypeptide chain. The nascent polypeptides leave the ribosome through a tunnel in the LSU and interact with protein factors that function in enzymatic processing, targeting, and the membrane insertion of nascent chains at the exit of the ribosomal tunnel. As part of the 5S RNP/5S ribonucleoprotein particle it is an essential component of the LSU, required for its formation and the maturation of rRNAs. It also couples ribosome biogenesis to p53/TP53 activation. As part of the 5S RNP it accumulates in the nucleoplasm and inhibits MDM2, when ribosome biogenesis is perturbed, mediating the stabilization and the activation of TP53. In Oryctolagus cuniculus (Rabbit), this protein is Large ribosomal subunit protein uL18 (RPL5).